The primary structure comprises 1308 residues: MGSVTGAVLKTLLLLSTQNWNRVEAGNSYDCDDPLVSALPQASFSSSSELSSSHGPGFARLNRRDGAGGWSPLVSNKYQWLQIDLGERMEVTAVATQGGYGSSNWVTSYLLMFSDSGWNWKQYRQEDSIWGFSGNANADSVVYYRLQPSIKARFLRFIPLEWNPKGRIGMRIEVFGCAYRSEVVDLDGKSSLLYRFDQKSLSPIKDIISLKFKTMQSDGILLHREGPNGDHITLQLRRARLFLLINSGEAKLPSTSTLVNLTLGSLLDDQHWHSVLIQRLGKQVNFTVDEHRHHFHARGEFNLMNLDYEISFGGIPAPGKSVSFPHRNFHGCLENLYYNGVDIIDLAKQQKPQIIAMGNVSFSCSQPQSMPVTFLSSRSYLALPDFSGEEEVSATFQFRTWNKAGLLLFSELQLISGGILLFLSDGKLKSNLYQPGKLPSDITAGVELNDGQWHSVSLSAKKNHLSVAVDGQMASAAPLLGPEQIYSGGTYYFGGCPDKSFGSKCKSPLGGFQGCMRLISISGKVVDLISVQQGSLGNFSDLQIDSCGISDRCLPNYCEHGGECSQSWSTFHCNCTNTGYRGATCHNSIYEQSCEAYKHRGNTSGFYYIDSDGSGPLEPFLLYCNMTETAWTIIQHNGSDLTRVRNTNPENPYAGFFEYVASMEQLQATINRAEHCEQEFTYYCKKSRLVNKQDGTPLSWWVGRTNETQTYWGGSSPDLQKCTCGLEGNCIDSQYYCNCDADRNEWTNDTGLLAYKEHLPVTKIVITDTGRLHSEAAYKLGPLLCQGDRSFWNSASFDTEASYLHFPTFHGELSADVSFFFKTTASSGVFLENLGIADFIRIELRSPTVVTFSFDVGNGPFEISVQSPTHFNDNQWHHVRVERNMKEASLQVDQLTPKTQPAPADGHVLLQLNSQLFVGGTATRQRGFLGCIRSLQLNGMTLDLEERAQVTPEVQPGCRGHCSSYGKLCRNGGKCRERPIGFFCDCTFSAYTGPFCSNEISAYFGSGSSVIYNFQENYLLSKNSSSHAASFHGDMKLSREMIKFSFRTTRTPSLLLFVSSFYKEYLSVIIAKNGSLQIRYKLNKYQEPDVVNFDFKNMADGQLHHIMINREEGVVFIEIDDNRRRQVHLSSGTEFSAVKSLVLGRILEHSDVDQDTALAGAQGFTGCLSAVQLSHVAPLKAALHPSHPDPVTVTGHVTESSCMAQPGTDATSRERTHSFADHSGTIDDREPLANAIKSDSAVIGGLIAVVIFILLCITAIAVRIYQQKRLYKRSEAKRSENVDSAEAVLKSELNIQNAVNENQKEYFF.

The N-terminal stretch at Met-1 to Ala-25 is a signal peptide. Over Gly-26–Ala-1241 the chain is Extracellular. Residues Cys-31–Cys-177 form the F5/8 type C domain. Cys-31 and Cys-177 are joined by a disulfide. 2 consecutive Laminin G-like domains span residues Phe-212–Cys-364 and Phe-398–Cys-547. 4 N-linked (GlcNAc...) asparagine glycosylation sites follow: Asn-260, Asn-285, Asn-359, and Asn-538. Disulfide bonds link Cys-332–Cys-364, Cys-515–Cys-547, Cys-553–Cys-564, and Cys-558–Cys-573. In terms of domain architecture, EGF-like 1 spans Ile-549–His-586. Asn-574 is a glycosylation site (N-linked (GlcNAc...) asparagine). Cys-575 and Cys-585 are disulfide-bonded. Positions Asn-587–Trp-792 constitute a Fibrinogen C-terminal domain. N-linked (GlcNAc...) asparagine glycans are attached at residues Asn-602, Asn-625, Asn-637, Asn-706, and Asn-748. One can recognise a Laminin G-like 3 domain in the interval Asn-793–Gly-957. Intrachain disulfides connect Cys-931–Cys-958, Cys-962–Cys-975, Cys-969–Cys-984, and Cys-986–Cys-996. The 40-residue stretch at Cys-958–Ser-997 folds into the EGF-like 2 domain. N-linked (GlcNAc...) asparagine glycosylation is found at Asn-1023 and Asn-1073. The region spanning Phe-1046 to Cys-1202 is the Laminin G-like 4 domain. Residues Cys-1167 and Cys-1202 are joined by a disulfide bond. The chain crosses the membrane as a helical span at residues Val-1242–Val-1262. At Arg-1263–Phe-1308 the chain is on the cytoplasmic side.

Belongs to the neurexin family. In terms of assembly, interacts with TIAM1.

Its subcellular location is the presynaptic cell membrane. Presynaptic protein involved in both dopaminergic synaptic transmission and GABAergic system, thereby participating in the structural maturation of inhibitory interneuron synapses. Involved in the dopaminergic synaptic transmission by attenuating dopamine release through a presynaptic mechanism. Also participates in the GABAergic system. In Homo sapiens (Human), this protein is Contactin-associated protein-like 4 (CNTNAP4).